Consider the following 424-residue polypeptide: Gamma-glutamyl phosphate reductase (424 aa).

Belongs to the gamma-glutamyl phosphate reductase family.

Its subcellular location is the cytoplasm. It catalyses the reaction L-glutamate 5-semialdehyde + phosphate + NADP(+) = L-glutamyl 5-phosphate + NADPH + H(+). Its pathway is amino-acid biosynthesis; L-proline biosynthesis; L-glutamate 5-semialdehyde from L-glutamate: step 2/2. Catalyzes the NADPH-dependent reduction of L-glutamate 5-phosphate into L-glutamate 5-semialdehyde and phosphate. The product spontaneously undergoes cyclization to form 1-pyrroline-5-carboxylate. The sequence is that of Gamma-glutamyl phosphate reductase from Halorhodospira halophila (strain DSM 244 / SL1) (Ectothiorhodospira halophila (strain DSM 244 / SL1)).